Consider the following 235-residue polypeptide: Attacin-E (235 aa).

An N-terminal signal peptide occupies residues 1 to 19 (MFGKIVFLLLVALCAGVQS). Positions 20 to 47 (RYLIVSEPVYYIEHYEEPELLASSRVRR) are excised as a propeptide.

Belongs to the attacin/sarcotoxin-2 family. Attacin F appears to be derived by proteolytic digestion of attacin E.

Its subcellular location is the secreted. Hemolymph antibacterial protein. The protein is Attacin-E of Hyalophora cecropia (Cecropia moth).